The primary structure comprises 514 residues: 2-isopropylmalate synthase (514 aa).

A Pyruvate carboxyltransferase domain is found at 5-268 (LIIFDTTLRD…DVGIDTSQIV (264 aa)). Mn(2+) is bound by residues Asp-14, His-202, His-204, and Asn-239. The tract at residues 395–514 (KFVSLSQHSE…KDDKVNPQRS (120 aa)) is regulatory domain.

Belongs to the alpha-IPM synthase/homocitrate synthase family. LeuA type 1 subfamily. As to quaternary structure, homodimer. It depends on Mn(2+) as a cofactor.

The protein resides in the cytoplasm. The enzyme catalyses 3-methyl-2-oxobutanoate + acetyl-CoA + H2O = (2S)-2-isopropylmalate + CoA + H(+). It functions in the pathway amino-acid biosynthesis; L-leucine biosynthesis; L-leucine from 3-methyl-2-oxobutanoate: step 1/4. Functionally, catalyzes the condensation of the acetyl group of acetyl-CoA with 3-methyl-2-oxobutanoate (2-ketoisovalerate) to form 3-carboxy-3-hydroxy-4-methylpentanoate (2-isopropylmalate). The protein is 2-isopropylmalate synthase of Burkholderia lata (strain ATCC 17760 / DSM 23089 / LMG 22485 / NCIMB 9086 / R18194 / 383).